Consider the following 196-residue polypeptide: Protein GrpE (196 aa).

The segment covering 1–26 (MQEPHNQEPIEEQKLSEMEDTLEKQH) has biased composition (basic and acidic residues). Residues 1-40 (MQEPHNQEPIEEQKLSEMEDTLEKQHSGASTENTERAEEG) form a disordered region.

This sequence belongs to the GrpE family. As to quaternary structure, homodimer.

The protein localises to the cytoplasm. Its function is as follows. Participates actively in the response to hyperosmotic and heat shock by preventing the aggregation of stress-denatured proteins, in association with DnaK and GrpE. It is the nucleotide exchange factor for DnaK and may function as a thermosensor. Unfolded proteins bind initially to DnaJ; upon interaction with the DnaJ-bound protein, DnaK hydrolyzes its bound ATP, resulting in the formation of a stable complex. GrpE releases ADP from DnaK; ATP binding to DnaK triggers the release of the substrate protein, thus completing the reaction cycle. Several rounds of ATP-dependent interactions between DnaJ, DnaK and GrpE are required for fully efficient folding. This chain is Protein GrpE, found in Nitrosomonas eutropha (strain DSM 101675 / C91 / Nm57).